A 418-amino-acid chain; its full sequence is Glucose-1-phosphate adenylyltransferase (418 aa).

Alpha-D-glucose 1-phosphate-binding positions include Tyr-104, Gly-169, 184 to 185 (EK), and Ser-202.

Belongs to the bacterial/plant glucose-1-phosphate adenylyltransferase family. Homotetramer.

It carries out the reaction alpha-D-glucose 1-phosphate + ATP + H(+) = ADP-alpha-D-glucose + diphosphate. The protein operates within glycan biosynthesis; glycogen biosynthesis. In terms of biological role, involved in the biosynthesis of ADP-glucose, a building block required for the elongation reactions to produce glycogen. Catalyzes the reaction between ATP and alpha-D-glucose 1-phosphate (G1P) to produce pyrophosphate and ADP-Glc. The sequence is that of Glucose-1-phosphate adenylyltransferase from Jannaschia sp. (strain CCS1).